We begin with the raw amino-acid sequence, 137 residues long: Putative FERT-1 protein (137 aa).

The chain is Putative FERT-1 protein (FERT-1) from Ascaris suum (Pig roundworm).